A 533-amino-acid polypeptide reads, in one-letter code: MVFSRDIPSPASMFSTYASMMGYVMIIKPMINTIIPRPVQNFVFSYLKSFAGSRSSTLTLTIDQMSSMYIPDELYAAAQAYLSTKISPNSVRLIMARDPAEKKVKLYLSDGEVVSDVYNGIKLKWRFLARNKNNTMVEEYGQSYQGNIQRESLELSFDKKHRDLVVNSYIPYVESKAKEVNNKRRILKMHCYSHMAQTWQSVNFKHPSTFDTMAMNDDLKRSMIEDLDRFVGRKDFYKRVGKAWKRGYLLYGPPGTGKSSLVAAMANYLKFDIYDLQLASVQGDAHLRSLLLATNNSSILLIEDIDCSVDLPTRLQPPTETSQPLGAVQVSKPLTLSGLLNCIDGLWSSCGNERIIIFTTNNKEKLDPALLRPGRMDMHIYMGHCSFQGFKTLASNYLGLSDENDDTHPLCPDIKHLIDGHVLTPAQVAEELMKDEDADAALEGLVKVLKRKRLEPKKCDDESKMKKLKEGEEAIADAELAVLTPAQVEDKEELVASEYANVMPEWLPRSRLVMVLPGFHRARGIRRGLGDEM.

A helical transmembrane segment spans residues 11 to 27 (ASMFSTYASMMGYVMII). 252-259 (GPPGTGKS) is an ATP binding site.

Belongs to the AAA ATPase family. BCS1 subfamily. Requires Mg(2+) as cofactor.

It localises to the membrane. It catalyses the reaction ATP + H2O = ADP + phosphate + H(+). The chain is AAA-ATPase At5g17740 from Arabidopsis thaliana (Mouse-ear cress).